Reading from the N-terminus, the 365-residue chain is Phospho-N-acetylmuramoyl-pentapeptide-transferase (365 aa).

Helical transmembrane passes span 3 to 23 (HIII…PILI), 54 to 74 (GIAI…ASVF), 81 to 101 (PTAS…LGFL), 119 to 139 (GKLL…LLFL), 162 to 182 (IAIG…YILV), 198 to 218 (LAAG…FWQF), 239 to 259 (LSIL…WNAA), 263 to 283 (IFMG…LSVT), 289 to 309 (LMIV…IQVV), and 342 to 362 (FWLL…ADWL).

The protein belongs to the glycosyltransferase 4 family. MraY subfamily. Mg(2+) serves as cofactor.

It is found in the cell membrane. It carries out the reaction UDP-N-acetyl-alpha-D-muramoyl-L-alanyl-gamma-D-glutamyl-meso-2,6-diaminopimeloyl-D-alanyl-D-alanine + di-trans,octa-cis-undecaprenyl phosphate = di-trans,octa-cis-undecaprenyl diphospho-N-acetyl-alpha-D-muramoyl-L-alanyl-D-glutamyl-meso-2,6-diaminopimeloyl-D-alanyl-D-alanine + UMP. The protein operates within cell wall biogenesis; peptidoglycan biosynthesis. Its function is as follows. Catalyzes the initial step of the lipid cycle reactions in the biosynthesis of the cell wall peptidoglycan: transfers peptidoglycan precursor phospho-MurNAc-pentapeptide from UDP-MurNAc-pentapeptide onto the lipid carrier undecaprenyl phosphate, yielding undecaprenyl-pyrophosphoryl-MurNAc-pentapeptide, known as lipid I. This chain is Phospho-N-acetylmuramoyl-pentapeptide-transferase, found in Corynebacterium kroppenstedtii (strain DSM 44385 / JCM 11950 / CIP 105744 / CCUG 35717).